The following is a 511-amino-acid chain: MEEFKRYLELDKSKSQQHDFLYPLLFQEYIYGLAHHNQSLTRSSSLELEKTGFDNNFSLLIVKRLITQMGRQNHLSFFTNDSNQNPFLGHNTTLYSKILLDGFVVVLEIPFSIRVISSLECKEIVKSHNLRSIHSIFPFLEDKFTHLNYVLDFLIPHFIHLEILVQTLRYWVKDASSLHLLRALIHKYHNWNNIITLKKSSFSFSKRNKRFLFFLYNFHVYEYESIFTFLRNQSSHLKSNSYRPFLDRIYFYEKRDHFLEIFTNYFQAILCSFKDPFMHYVRYQGKALLASKGVFLLINKWNSYLVNFWQCYFYTWSQPGRIQINKLSNHSLDLLGYLSSVRLTSSMVRNQMLENVFLIANASKKLNTIVPIIPLIGSLSKAKFCNPLGHPISKPVWADLSDSDIIDRFGRIYRNISHYYSGSSKKMSLYRIKYIIRLSCARTLARKHKSTVRAFLKRTGSELLEEFFMEEERIFSLTFPKISSTSTSGGLYRNPIWYLDIFCINDLANHE.

Belongs to the intron maturase 2 family. MatK subfamily.

Its subcellular location is the plastid. The protein resides in the chloroplast. Functionally, usually encoded in the trnK tRNA gene intron. Probably assists in splicing its own and other chloroplast group II introns. The chain is Maturase K from Primula veris (Cowslip).